Here is a 397-residue protein sequence, read N- to C-terminus: MNRVVVGLQWGDEGKGKVVTYLSRYHDIVARFSGGANAGHTVNYGDFKVIHHLLPSADFTKNRGIAIGSGVLLDPQVLTEELRELKEKFPDYSGEIFISESAHVVLPVHKEMDRIIDEVLKIGTTKRGIGPACADRVMRVNVRVAELGNEEKLRYFLEKNLSLKKIYGVDFDAEKMMGDLSTFYETIKDFVVSPVQLKRILEEKSVLFEGTQGVLLDLDVGTYPYVTSMNCSSSGVSAGMGFPVEVDEVLGVFKAYTTRVGEGPFPTELTGEEGEKLRKAGHEYGSTTGRPRRCGWLDLPLLRYAIEISGVDSLVMTKADVLNGFEKIKVCVRYSDGRDLVSLRDLEKKEPVYEVFDGWKSLEDKNFERFVDFIERETGRPVRYISTGEKLEDIVEV.

GTP-binding positions include 11-17 (GDEGKGK) and 39-41 (GHT). D12 serves as the catalytic Proton acceptor. The Mg(2+) site is built by D12 and G39. IMP contacts are provided by residues 12-15 (DEGK), 37-40 (NAGH), T125, R139, Q212, T227, and R290. H40 acts as the Proton donor in catalysis. Residue 286 to 292 (STTGRPR) coordinates substrate. GTP contacts are provided by residues R292, 318–320 (KAD), and 386–388 (STG).

The protein belongs to the adenylosuccinate synthetase family. As to quaternary structure, homodimer. Mg(2+) serves as cofactor.

It localises to the cytoplasm. It carries out the reaction IMP + L-aspartate + GTP = N(6)-(1,2-dicarboxyethyl)-AMP + GDP + phosphate + 2 H(+). Its pathway is purine metabolism; AMP biosynthesis via de novo pathway; AMP from IMP: step 1/2. In terms of biological role, plays an important role in the de novo pathway of purine nucleotide biosynthesis. Catalyzes the first committed step in the biosynthesis of AMP from IMP. This is Adenylosuccinate synthetase from Thermotoga maritima (strain ATCC 43589 / DSM 3109 / JCM 10099 / NBRC 100826 / MSB8).